Reading from the N-terminus, the 196-residue chain is Pyridoxal 5'-phosphate synthase subunit PdxT (196 aa).

An L-glutamine-binding site is contributed by 47–49 (GES). Cys-79 acts as the Nucleophile in catalysis. Residues Arg-106 and 134–135 (IR) contribute to the L-glutamine site. Active-site charge relay system residues include His-170 and Glu-172.

It belongs to the glutaminase PdxT/SNO family. As to quaternary structure, in the presence of PdxS, forms a dodecamer of heterodimers. Only shows activity in the heterodimer.

The enzyme catalyses aldehydo-D-ribose 5-phosphate + D-glyceraldehyde 3-phosphate + L-glutamine = pyridoxal 5'-phosphate + L-glutamate + phosphate + 3 H2O + H(+). It carries out the reaction L-glutamine + H2O = L-glutamate + NH4(+). It participates in cofactor biosynthesis; pyridoxal 5'-phosphate biosynthesis. Catalyzes the hydrolysis of glutamine to glutamate and ammonia as part of the biosynthesis of pyridoxal 5'-phosphate. The resulting ammonia molecule is channeled to the active site of PdxS. This Bacillus cereus (strain ZK / E33L) protein is Pyridoxal 5'-phosphate synthase subunit PdxT.